We begin with the raw amino-acid sequence, 352 residues long: Thiamine-monophosphate kinase (352 aa).

Residues aspartate 58, threonine 73, and aspartate 75 each contribute to the Mg(2+) site. Histidine 82 is a substrate binding site. Mg(2+) contacts are provided by aspartate 103 and aspartate 151. ATP-binding positions include 150–151 (GD) and arginine 177. Aspartate 239 is a Mg(2+) binding site. Serine 241 serves as a coordination point for ATP. Position 242 (aspartate 242) interacts with Mg(2+). Substrate contacts are provided by aspartate 294 and tryptophan 349.

The protein belongs to the thiamine-monophosphate kinase family.

The catalysed reaction is thiamine phosphate + ATP = thiamine diphosphate + ADP. It functions in the pathway cofactor biosynthesis; thiamine diphosphate biosynthesis; thiamine diphosphate from thiamine phosphate: step 1/1. Its function is as follows. Catalyzes the ATP-dependent phosphorylation of thiamine-monophosphate (TMP) to form thiamine-pyrophosphate (TPP), the active form of vitamin B1. In Caulobacter vibrioides (strain ATCC 19089 / CIP 103742 / CB 15) (Caulobacter crescentus), this protein is Thiamine-monophosphate kinase.